The primary structure comprises 161 residues: Nascent polypeptide-associated complex subunit beta (161 aa).

2 disordered regions span residues 14-41 (LSAN…KDDS) and 125-161 (QNAQ…ADVE). The region spanning 37–102 (NKDDSKLQAQ…PQEKSLQDLF (66 aa)) is the NAC-A/B domain. The segment covering 125 to 134 (QNAQAAAPAT) has biased composition (low complexity). The segment covering 135–146 (EGHEAGEKKDND) has biased composition (basic and acidic residues).

It belongs to the NAC-beta family. Part of the nascent polypeptide-associated complex (NAC), consisting of EGD2 and EGD1. NAC associates with ribosomes via EGD1.

The protein resides in the cytoplasm. It is found in the nucleus. In terms of biological role, component of the nascent polypeptide-associated complex (NAC), a dynamic component of the ribosomal exit tunnel, protecting the emerging polypeptides from interaction with other cytoplasmic proteins to ensure appropriate nascent protein targeting. The NAC complex also promotes mitochondrial protein import by enhancing productive ribosome interactions with the outer mitochondrial membrane and blocks the inappropriate interaction of ribosomes translating non-secretory nascent polypeptides with translocation sites in the membrane of the endoplasmic reticulum. EGD1 may act as a transcription factor that exert a negative effect on the expression of several genes that are transcribed by RNA polymerase II. In Eremothecium gossypii (strain ATCC 10895 / CBS 109.51 / FGSC 9923 / NRRL Y-1056) (Yeast), this protein is Nascent polypeptide-associated complex subunit beta (EGD1).